The chain runs to 240 residues: Insulin-like growth factor-binding protein 6 (240 aa).

Positions 1 to 27 (MTPHRLLPPLLLLLALLLAASPGGALA) are cleaved as a signal peptide. The region spanning 28 to 107 (RCPGCGQGVQ…LLGRGRCLPA (80 aa)) is the IGFBP N-terminal domain. 5 disulfide bridges follow: Cys29–Cys32, Cys40–Cys44, Cys57–Cys63, Cys71–Cys84, and Cys78–Cys104. The disordered stretch occupies residues 109–160 (APAVAEENPKESKPQAGTARPQDVNRRDQQRNPGTSTTPSQPNSAGVQDTEM). A glycan (O-linked (HexNAc...) threonine) is linked at Thr126. Polar residues predominate over residues 139–155 (RNPGTSTTPSQPNSAGV). Ser144 is a glycosylation site (O-linked (HexNAc...) serine). Residues Thr145 and Thr146 are each glycosylated (O-linked (HexNAc...) threonine). Residue Ser152 is glycosylated (O-linked (HexNAc...) serine). The 75-residue stretch at 160–234 (MGPCRRHLDS…SPDGNGSSSC (75 aa)) folds into the Thyroglobulin type-1 domain. Intrachain disulfides connect Cys163/Cys190, Cys201/Cys212, and Cys214/Cys234. Positions 217 to 240 (RMGKSLPGSPDGNGSSSCPTGSSG) are disordered. The segment covering 228–240 (GNGSSSCPTGSSG) has biased composition (polar residues).

As to quaternary structure, interacts (via C-terminal domain) with PHB2. Post-translationally, O-linked glycans consist of hexose (probably Gal), N-acetylhexosamine (probably GalNAc) and sialic acid residues. O-glycosylated with core 1 or possibly core 8 glycans. O-glycosylated on one site only in the region AA 143-168 in cerebrospinal fluid.

It is found in the secreted. Functionally, IGF-binding proteins prolong the half-life of the IGFs and have been shown to either inhibit or stimulate the growth promoting effects of the IGFs on cell culture. They alter the interaction of IGFs with their cell surface receptors. Activates the MAPK signaling pathway and induces cell migration. In Homo sapiens (Human), this protein is Insulin-like growth factor-binding protein 6.